A 228-amino-acid chain; its full sequence is Cytochrome c oxidase subunit 2 (228 aa).

Residues 1–26 (MATWANLGLQDSSSPLMEQLNFFHDH) lie on the Mitochondrial intermembrane side of the membrane. The helical transmembrane segment at 27 to 48 (TLLILTMITILVGYIMGMLSFN) threads the bilayer. Residues 49-62 (KFTNRFLLHGQTIE) lie on the Mitochondrial matrix side of the membrane. The helical transmembrane segment at 63–82 (IIWTVLPAIILMFIAFPSLR) threads the bilayer. Topologically, residues 83–228 (LLYLMDEINT…FIKWITSMTN (146 aa)) are mitochondrial intermembrane. Cu cation contacts are provided by His-161, Cys-196, Glu-198, Cys-200, His-204, and Met-207. Glu-198 is a binding site for Mg(2+).

The protein belongs to the cytochrome c oxidase subunit 2 family. In terms of assembly, component of the cytochrome c oxidase (complex IV, CIV), a multisubunit enzyme composed of a catalytic core of 3 subunits and several supernumerary subunits. The complex exists as a monomer or a dimer and forms supercomplexes (SCs) in the inner mitochondrial membrane with ubiquinol-cytochrome c oxidoreductase (cytochrome b-c1 complex, complex III, CIII). Cu cation serves as cofactor.

It is found in the mitochondrion inner membrane. The catalysed reaction is 4 Fe(II)-[cytochrome c] + O2 + 8 H(+)(in) = 4 Fe(III)-[cytochrome c] + 2 H2O + 4 H(+)(out). In terms of biological role, component of the cytochrome c oxidase, the last enzyme in the mitochondrial electron transport chain which drives oxidative phosphorylation. The respiratory chain contains 3 multisubunit complexes succinate dehydrogenase (complex II, CII), ubiquinol-cytochrome c oxidoreductase (cytochrome b-c1 complex, complex III, CIII) and cytochrome c oxidase (complex IV, CIV), that cooperate to transfer electrons derived from NADH and succinate to molecular oxygen, creating an electrochemical gradient over the inner membrane that drives transmembrane transport and the ATP synthase. Cytochrome c oxidase is the component of the respiratory chain that catalyzes the reduction of oxygen to water. Electrons originating from reduced cytochrome c in the intermembrane space (IMS) are transferred via the dinuclear copper A center (CU(A)) of subunit 2 and heme A of subunit 1 to the active site in subunit 1, a binuclear center (BNC) formed by heme A3 and copper B (CU(B)). The BNC reduces molecular oxygen to 2 water molecules using 4 electrons from cytochrome c in the IMS and 4 protons from the mitochondrial matrix. The polypeptide is Cytochrome c oxidase subunit 2 (COII) (Anopheles gambiae (African malaria mosquito)).